A 254-amino-acid chain; its full sequence is Translation initiation factor 2 subunit alpha (254 aa).

An S1 motif domain is found at 10–81 (GDLVVVKITE…ERKNVDLSLK (72 aa)).

It belongs to the eIF-2-alpha family. In terms of assembly, heterotrimer composed of an alpha, a beta and a gamma chain.

Functionally, eIF-2 functions in the early steps of protein synthesis by forming a ternary complex with GTP and initiator tRNA. The polypeptide is Translation initiation factor 2 subunit alpha (Thermoplasma volcanium (strain ATCC 51530 / DSM 4299 / JCM 9571 / NBRC 15438 / GSS1)).